The primary structure comprises 181 residues: Peptidyl-tRNA hydrolase (181 aa).

Y14 serves as a coordination point for tRNA. Catalysis depends on H19, which acts as the Proton acceptor. TRNA-binding residues include F61, N63, and N107.

It belongs to the PTH family. As to quaternary structure, monomer.

It localises to the cytoplasm. It catalyses the reaction an N-acyl-L-alpha-aminoacyl-tRNA + H2O = an N-acyl-L-amino acid + a tRNA + H(+). Functionally, hydrolyzes ribosome-free peptidyl-tRNAs (with 1 or more amino acids incorporated), which drop off the ribosome during protein synthesis, or as a result of ribosome stalling. Catalyzes the release of premature peptidyl moieties from peptidyl-tRNA molecules trapped in stalled 50S ribosomal subunits, and thus maintains levels of free tRNAs and 50S ribosomes. The chain is Peptidyl-tRNA hydrolase from Campylobacter fetus subsp. fetus (strain 82-40).